Here is a 308-residue protein sequence, read N- to C-terminus: Ornithine carbamoyltransferase (308 aa).

Residues 57–60, Q84, R108, and 135–138 contribute to the carbamoyl phosphate site; these read STRT and HPCQ. L-ornithine is bound by residues N166, D224, and 228–229; that span reads SM. Carbamoyl phosphate-binding positions include 264-265 and R292; that span reads CL.

Belongs to the aspartate/ornithine carbamoyltransferase superfamily. OTCase family.

Its subcellular location is the cytoplasm. The catalysed reaction is carbamoyl phosphate + L-ornithine = L-citrulline + phosphate + H(+). It functions in the pathway amino-acid biosynthesis; L-arginine biosynthesis; L-arginine from L-ornithine and carbamoyl phosphate: step 1/3. Reversibly catalyzes the transfer of the carbamoyl group from carbamoyl phosphate (CP) to the N(epsilon) atom of ornithine (ORN) to produce L-citrulline. This Ralstonia nicotianae (strain ATCC BAA-1114 / GMI1000) (Ralstonia solanacearum) protein is Ornithine carbamoyltransferase.